A 215-amino-acid polypeptide reads, in one-letter code: Agamous-like MADS-box protein AGL63 (215 aa).

The 61-residue stretch at 1–61 (MRKGKRVIKK…NRLYDFCSNS (61 aa)) folds into the MADS-box domain. In terms of domain architecture, K-box spans 90–178 (CSDCVKTKES…GSSWEQLMWQ (89 aa)). Disordered regions lie at residues 143 to 172 (ARKSEFMHQQQQQQTDQKLKGKEKGQGSSW) and 184 to 215 (MTCQRQKDPAPANEGGVPFLRWGTTHRRSSPP).

In terms of assembly, forms homodimer. Interacts with AGL16. Expressed in bud pedicels, petals, anthers, style, ovary, seeds and embryos.

Its subcellular location is the nucleus. Its function is as follows. Probable transcription factor involved in the regulation of fruit growth. Contributes to integument development. Controls organ size via cell expansion. Involved in the regulation of longitudinal growth of the fruit evenly throughout the radial axis. Functions redundantly with TT16/AGL32 to repress nucellus growth and promote its degeneration. This chain is Agamous-like MADS-box protein AGL63, found in Arabidopsis thaliana (Mouse-ear cress).